The sequence spans 319 residues: Annexin A5 (319 aa).

Ala-2 bears the N-acetylalanine mark. Annexin repeat units follow at residues 13-84 (FDGR…ALMK), 85-156 (PSRL…VLLQ), 168-240 (AQVE…AVVK), and 244-315 (SIPA…LLCG). Lys-27 participates in a covalent cross-link: Glycyl lysine isopeptide (Lys-Gly) (interchain with G-Cter in SUMO1); alternate. Residue Lys-27 forms a Glycyl lysine isopeptide (Lys-Gly) (interchain with G-Cter in SUMO2); alternate linkage. Ser-35 bears the Phosphoserine mark. An N6-acetyllysine mark is found at Lys-68, Lys-74, Lys-77, Lys-95, and Lys-99. N6-succinyllysine is present on Lys-288. The [IL]-x-C-x-x-[DE] motif signature appears at 312–318 (LLCGGED).

This sequence belongs to the annexin family. As to quaternary structure, monomer. Binds ATRX, EIF5B and DNMT1. S-nitrosylation is induced by interferon-gamma and oxidatively-modified low-densitity lipoprotein (LDL(ox)) possibly implicating the iNOS-S100A8/9 transnitrosylase complex.

This protein is an anticoagulant protein that acts as an indirect inhibitor of the thromboplastin-specific complex, which is involved in the blood coagulation cascade. The polypeptide is Annexin A5 (Anxa5) (Rattus norvegicus (Rat)).